The following is a 682-amino-acid chain: Potassium-transporting ATPase ATP-binding subunit (682 aa).

A run of 4 helical transmembrane segments spans residues 34 to 54 (PVMF…IAMA), 62 to 82 (ALFS…ANFA), 219 to 239 (IALT…TATL), and 254 to 274 (VLVA…LSAI). Residue aspartate 307 is the 4-aspartylphosphate intermediate of the active site. ATP contacts are provided by residues aspartate 344, glutamate 348, 377-384 (FTAQSRMS), and lysine 395. Residues aspartate 518 and aspartate 522 each contribute to the Mg(2+) site. Transmembrane regions (helical) follow at residues 588 to 608 (FAII…LNIM), 616 to 636 (AILS…PLAL), and 656 to 676 (IYGL…DLLL).

Belongs to the cation transport ATPase (P-type) (TC 3.A.3) family. Type IA subfamily. In terms of assembly, the system is composed of three essential subunits: KdpA, KdpB and KdpC.

It localises to the cell inner membrane. The catalysed reaction is K(+)(out) + ATP + H2O = K(+)(in) + ADP + phosphate + H(+). In terms of biological role, part of the high-affinity ATP-driven potassium transport (or Kdp) system, which catalyzes the hydrolysis of ATP coupled with the electrogenic transport of potassium into the cytoplasm. This subunit is responsible for energy coupling to the transport system and for the release of the potassium ions to the cytoplasm. The chain is Potassium-transporting ATPase ATP-binding subunit from Shigella boydii serotype 4 (strain Sb227).